The following is a 407-amino-acid chain: uncharacterized protein (407 aa).

Residues 145–231 are disordered; the sequence is EANRFGRSNS…DPLTSITSDT (87 aa). The segment covering 158–175 has biased composition (basic residues); that stretch reads SNSRSKSSRSRSNNRSKS. Low complexity predominate over residues 176–196; the sequence is SRSSSTQSKSNNRSNSRSNSK. The 137-residue stretch at 271–407 folds into the N-acetyltransferase domain; that stretch reads IVFETLDQND…NHKIHMEKDI (137 aa).

It localises to the virion. This is an uncharacterized protein from Acanthamoeba polyphaga (Amoeba).